The sequence spans 167 residues: Peptide deformylase (167 aa).

Fe cation-binding residues include Cys90 and His132. Glu133 is a catalytic residue. Position 136 (His136) interacts with Fe cation.

This sequence belongs to the polypeptide deformylase family. It depends on Fe(2+) as a cofactor.

It carries out the reaction N-terminal N-formyl-L-methionyl-[peptide] + H2O = N-terminal L-methionyl-[peptide] + formate. Functionally, removes the formyl group from the N-terminal Met of newly synthesized proteins. Requires at least a dipeptide for an efficient rate of reaction. N-terminal L-methionine is a prerequisite for activity but the enzyme has broad specificity at other positions. This is Peptide deformylase from Dehalococcoides mccartyi (strain CBDB1).